Consider the following 134-residue polypeptide: MGSLNVSIVTPDGPVYEGVAQMVIARTKAGELGILPGHVPLVAPLKIDIVRLKVESGEEWVAVNGGFMEVNGEEVNILADTAEREQDIDIDRAEKAKQRAEEELSRAKEQKVDEVMARLALQRAINRIHAKEHN.

This sequence belongs to the ATPase epsilon chain family. In terms of assembly, F-type ATPases have 2 components, CF(1) - the catalytic core - and CF(0) - the membrane proton channel. CF(1) has five subunits: alpha(3), beta(3), gamma(1), delta(1), epsilon(1). CF(0) has three main subunits: a, b and c.

The protein localises to the cell membrane. Produces ATP from ADP in the presence of a proton gradient across the membrane. The protein is ATP synthase epsilon chain of Listeria innocua serovar 6a (strain ATCC BAA-680 / CLIP 11262).